A 177-amino-acid polypeptide reads, in one-letter code: Endothelin-2 (177 aa).

Positions 1 to 23 (MPTALCSIALALLVALHEGKSQA) are cleaved as a signal peptide. Positions 24–45 (ATTPIPEQPAPLPRARGSHLRT) are excised as a propeptide. Cystine bridges form between Cys-48/Cys-62 and Cys-50/Cys-58. Residues 69-177 (VNTPGQTAPY…RPTHSRQRKR (109 aa)) constitute a propeptide that is removed on maturation. Positions 95–110 (CECYSARDPACATFCH) are endothelin-like. A disordered region spans residues 155–177 (HFARQQQKPTRETRPTHSRQRKR).

It belongs to the endothelin/sarafotoxin family. In terms of tissue distribution, expressed in various organs including heart, lung, liver, kidney, gastrointestinal tract, uterus and ovary, but not in spleen. Within the gastrointestinal tract, gene expression was detected in rumen, a ruminant-specific digestive organ, as well as stomach, duodenum and colon.

It is found in the secreted. Functionally, endothelins are endothelium-derived vasoconstrictor peptides. The polypeptide is Endothelin-2 (EDN2) (Bos taurus (Bovine)).